The sequence spans 325 residues: GMP reductase (325 aa).

The Thioimidate intermediate role is filled by Cys-173. 202 to 225 (IIADGGIRDHGDIAKSVRFGASMV) is a binding site for NADP(+).

It belongs to the IMPDH/GMPR family. GuaC type 2 subfamily.

The catalysed reaction is IMP + NH4(+) + NADP(+) = GMP + NADPH + 2 H(+). In terms of biological role, catalyzes the irreversible NADPH-dependent deamination of GMP to IMP. It functions in the conversion of nucleobase, nucleoside and nucleotide derivatives of G to A nucleotides, and in maintaining the intracellular balance of A and G nucleotides. This is GMP reductase from Variovorax paradoxus (strain S110).